The sequence spans 406 residues: Imidazolonepropionase (406 aa).

Fe(3+)-binding residues include H72 and H74. 2 residues coordinate Zn(2+): H72 and H74. Residues R81, Y144, and H177 each contribute to the 4-imidazolone-5-propanoate site. Y144 is an N-formimidoyl-L-glutamate binding site. Residue H242 participates in Fe(3+) binding. H242 contributes to the Zn(2+) binding site. Residue Q245 participates in 4-imidazolone-5-propanoate binding. D317 lines the Fe(3+) pocket. Position 317 (D317) interacts with Zn(2+). N319 and G321 together coordinate N-formimidoyl-L-glutamate. Position 322 (T322) interacts with 4-imidazolone-5-propanoate.

The protein belongs to the metallo-dependent hydrolases superfamily. HutI family. Requires Zn(2+) as cofactor. It depends on Fe(3+) as a cofactor.

It is found in the cytoplasm. It catalyses the reaction 4-imidazolone-5-propanoate + H2O = N-formimidoyl-L-glutamate. The protein operates within amino-acid degradation; L-histidine degradation into L-glutamate; N-formimidoyl-L-glutamate from L-histidine: step 3/3. In terms of biological role, catalyzes the hydrolytic cleavage of the carbon-nitrogen bond in imidazolone-5-propanoate to yield N-formimidoyl-L-glutamate. It is the third step in the universal histidine degradation pathway. The chain is Imidazolonepropionase from Yersinia pseudotuberculosis serotype O:3 (strain YPIII).